A 394-amino-acid chain; its full sequence is 1-deoxy-D-xylulose 5-phosphate reductoisomerase (394 aa).

NADPH contacts are provided by threonine 12, glycine 13, serine 14, isoleucine 15, lysine 39, glutamine 40, and asparagine 126. Lysine 127 serves as a coordination point for 1-deoxy-D-xylulose 5-phosphate. NADPH is bound at residue glutamate 128. Aspartate 152 is a Mn(2+) binding site. 4 residues coordinate 1-deoxy-D-xylulose 5-phosphate: serine 153, glutamate 154, serine 183, and histidine 206. Glutamate 154 is a binding site for Mn(2+). Glycine 212 is a binding site for NADPH. 4 residues coordinate 1-deoxy-D-xylulose 5-phosphate: serine 219, asparagine 224, lysine 225, and glutamate 228. Glutamate 228 serves as a coordination point for Mn(2+).

This sequence belongs to the DXR family. Requires Mg(2+) as cofactor. Mn(2+) serves as cofactor.

It catalyses the reaction 2-C-methyl-D-erythritol 4-phosphate + NADP(+) = 1-deoxy-D-xylulose 5-phosphate + NADPH + H(+). The protein operates within isoprenoid biosynthesis; isopentenyl diphosphate biosynthesis via DXP pathway; isopentenyl diphosphate from 1-deoxy-D-xylulose 5-phosphate: step 1/6. Functionally, catalyzes the NADPH-dependent rearrangement and reduction of 1-deoxy-D-xylulose-5-phosphate (DXP) to 2-C-methyl-D-erythritol 4-phosphate (MEP). This Neisseria gonorrhoeae (strain ATCC 700825 / FA 1090) protein is 1-deoxy-D-xylulose 5-phosphate reductoisomerase.